The sequence spans 95 residues: uncharacterized protein (95 aa).

Residues 1-64 form a disordered region; it reads MEIDDIFASK…PKGASGRKRT (64 aa). Over residues 18–28 the composition is skewed to basic and acidic residues; that stretch reads KSNDSKSEAKA. Positions 35–49 are enriched in polar residues; that stretch reads TKSTPSRPKPTNNQD.

This is an uncharacterized protein from Schizosaccharomyces pombe (strain 972 / ATCC 24843) (Fission yeast).